The following is a 149-amino-acid chain: Pleckstrin homology domain-containing family J member 1 (149 aa).

The 94-residue stretch at 15–108 (PAEMAAELGM…WMEALRRASY (94 aa)) folds into the PH domain.

Expressed in testis and liver.

The protein is Pleckstrin homology domain-containing family J member 1 (PLEKHJ1) of Homo sapiens (Human).